The sequence spans 543 residues: Sarafotoxin (543 aa).

A signal peptide spans 1-23 (MALLPRLAAGGLLLLLALAALEG). A propeptide spanning residues 24–69 (KPAPSALSQLLEKRSEDQAAAGRIIDGGDTKQAARDPSPQRNVEPL) is cleaved from the precursor. The segment at 45-65 (GRIIDGGDTKQAARDPSPQRN) is disordered. 12 repeat units span residues 51 to 90 (GDTK…DVIW), 91 to 130 (RDTK…DVIW), 131 to 170 (RDTK…DVIW), 171 to 210 (RDTK…DVIW), 211 to 250 (RDTK…DVIW), 251 to 290 (RDTK…GIIW), 291 to 330 (RDTK…DVIW), 331 to 370 (RDTK…DVIW), 371 to 410 (RDTK…DVIW), 411 to 450 (RDTK…DVIW), 451 to 490 (RDTK…DVIW), and 491 to 530 (RDTK…DVIW). The tract at residues 51–530 (GDTKQAARDP…LNFCHQDVIW (480 aa)) is 12 X 40 AA tandem repeats. 2 disulfide bridges follow: Cys-70–Cys-84 and Cys-72–Cys-80. The propeptide occupies 92-109 (DTKQAARDPSPQRNVEPL). 2 disulfides stabilise this stretch: Cys-110–Cys-124 and Cys-112–Cys-120. A propeptide spanning residues 132–149 (DTKQAARDPSPQRNVEPL) is cleaved from the precursor. 2 disulfide bridges follow: Cys-150–Cys-164 and Cys-152–Cys-160. The propeptide occupies 172 to 189 (DTKQAARDPSPQRNVEPL). Cystine bridges form between Cys-190/Cys-204 and Cys-192/Cys-200. Residues 212–229 (DTKQAARDPSPQRNVEPL) constitute a propeptide that is removed on maturation. Disulfide bonds link Cys-230–Cys-244 and Cys-232–Cys-240. Residues 252 to 269 (DTKQAARDPSPQRNVEPL) constitute a propeptide that is removed on maturation. 2 disulfides stabilise this stretch: Cys-270–Cys-284 and Cys-272–Cys-280. The propeptide occupies 292–309 (DTKQAARDPSPQRNVEPL). 2 disulfides stabilise this stretch: Cys-310-Cys-324 and Cys-312-Cys-320. Positions 332 to 349 (DTKQAARDPSPQRNVEPL) are excised as a propeptide. 2 cysteine pairs are disulfide-bonded: Cys-350/Cys-364 and Cys-352/Cys-360. A propeptide spanning residues 372–389 (DTKQAARDPSPQRNVEPL) is cleaved from the precursor. Cystine bridges form between Cys-390/Cys-404 and Cys-392/Cys-400. Residues 412 to 429 (DTKQAARDPSPQRNVEPL) constitute a propeptide that is removed on maturation. Disulfide bonds link Cys-430/Cys-444 and Cys-432/Cys-440. A propeptide spanning residues 452–469 (DTKQAARDPSPQRNVEPL) is cleaved from the precursor. 2 disulfide bridges follow: Cys-470-Cys-484 and Cys-472-Cys-480. The propeptide occupies 492-509 (DTKQAARDPSPQRNVEPL). 2 disulfides stabilise this stretch: Cys-510/Cys-524 and Cys-512/Cys-520. Residues 532–543 (NADTSANPEFLG) constitute a propeptide that is removed on maturation.

Belongs to the endothelin/sarafotoxin family. Expressed by the venom gland.

The protein resides in the secreted. Its function is as follows. Vasoconstrictor activity. These toxins cause cardiac arrest probably as a result of coronary vasospasm. Functionally, vasoconstrictor activity. Causes cardiac arrest probably as a result of coronary vasospasm. Displays high agonistic activities towards endothelin-2 receptor (EDNRB) (displays affinity in the picomolar range) and endothelin-1 receptor (EDNRA) (lower affinities). The chain is Sarafotoxin from Atractaspis engaddensis (Israeli burrowing asp).